The following is a 221-amino-acid chain: Putative hemin import ATP-binding protein HrtA (221 aa).

Residues 3–221 (LQLKHITKTF…IEIQDGKIEL (219 aa)) enclose the ABC transporter domain. Position 39 to 46 (39 to 46 (GASGSGKS)) interacts with ATP.

It belongs to the ABC transporter superfamily. HrtA family. In terms of assembly, the complex is composed of two ATP-binding proteins (HrtA), two transmembrane proteins (HrtB) and a solute-binding protein.

The protein resides in the cell membrane. Functionally, part of the ABC transporter complex hrt involved in hemin import. Responsible for energy coupling to the transport system. The sequence is that of Putative hemin import ATP-binding protein HrtA (hrtA) from Staphylococcus haemolyticus (strain JCSC1435).